A 449-amino-acid polypeptide reads, in one-letter code: Ribosomal protein uS12 methylthiotransferase RimO (449 aa).

The MTTase N-terminal domain occupies 15–125 (PRISFVSLGC…VLAAVHEAVP (111 aa)). Positions 24, 60, 89, 156, 160, and 163 each coordinate [4Fe-4S] cluster. Residues 142 to 379 (LTPRHYAYLK…MRTQQKVSAR (238 aa)) enclose the Radical SAM core domain. The TRAM domain occupies 382–448 (KRKVGTRQSV…PYDLSGTAVG (67 aa)).

It belongs to the methylthiotransferase family. RimO subfamily. Requires [4Fe-4S] cluster as cofactor.

Its subcellular location is the cytoplasm. The enzyme catalyses L-aspartate(89)-[ribosomal protein uS12]-hydrogen + (sulfur carrier)-SH + AH2 + 2 S-adenosyl-L-methionine = 3-methylsulfanyl-L-aspartate(89)-[ribosomal protein uS12]-hydrogen + (sulfur carrier)-H + 5'-deoxyadenosine + L-methionine + A + S-adenosyl-L-homocysteine + 2 H(+). Catalyzes the methylthiolation of an aspartic acid residue of ribosomal protein uS12. The polypeptide is Ribosomal protein uS12 methylthiotransferase RimO (Xanthobacter autotrophicus (strain ATCC BAA-1158 / Py2)).